Reading from the N-terminus, the 767-residue chain is 5-methyltetrahydropteroyltriglutamate--homocysteine methyltransferase (767 aa).

K126 is a binding site for 5-methyltetrahydropteroyltri-L-glutamate. L-homocysteine-binding positions include 445 to 447 (IGS) and E498. Residues 445–447 (IGS) and E498 contribute to the L-methionine site. 5-methyltetrahydropteroyltri-L-glutamate is bound by residues 529 to 530 (RC) and W575. D613 provides a ligand contact to L-homocysteine. An L-methionine-binding site is contributed by D613. Residue E619 coordinates 5-methyltetrahydropteroyltri-L-glutamate. Zn(2+) is bound by residues H655, C657, and E679. H708 (proton donor) is an active-site residue. C740 contributes to the Zn(2+) binding site.

It belongs to the vitamin-B12 independent methionine synthase family. The cofactor is Zn(2+).

It carries out the reaction 5-methyltetrahydropteroyltri-L-glutamate + L-homocysteine = tetrahydropteroyltri-L-glutamate + L-methionine. Its pathway is amino-acid biosynthesis; L-methionine biosynthesis via de novo pathway; L-methionine from L-homocysteine (MetE route): step 1/1. Catalyzes the transfer of a methyl group from 5-methyltetrahydrofolate to homocysteine resulting in methionine formation. This is 5-methyltetrahydropteroyltriglutamate--homocysteine methyltransferase from Psychromonas ingrahamii (strain DSM 17664 / CCUG 51855 / 37).